The primary structure comprises 411 residues: MQQITDLERTKILQNGGEKVKPTFSKEEMTRRNTRLREYMAKAGIDAVMFTSYHNINYYSDFLYTSFNRSYALVVTQDKHVTVSANIDAGMPWRRSFDENIVYTDWKRDNFLYAVKKVLNEGGFSSGRLGVENDHMTLDLRRQVQDALPNTELVDVSQAVMGHRMFKSDEEIDLIKNGARIADIGGAAVVEAIREGVPEYEVALHGTEAMVREIARTYPHAELRDTWIWFQSGINTDGAHNWATSRKLQRGDILSLNCFPMIAGYYTALERTLFLEEVSDRHLELWEINCKVHRRGLELIKPGARCMDIAAELNEIYREHDLLANRTFGYGHSFGVLSHYYGREAGLELREDIETVLEPGMVVSMEPMIMIPEGEPGAGGYREHDILVISENGTENITKFPFGPEHNIIKK.

H240 is a catalytic residue.

The protein belongs to the peptidase M24 family. Creatinase subfamily. In terms of assembly, homodimer.

It catalyses the reaction creatine + H2O = sarcosine + urea. This chain is Creatinase, found in Bacillus sp. (strain B-0618).